Reading from the N-terminus, the 355-residue chain is UDP-N-acetylglucosamine--N-acetylmuramyl-(pentapeptide) pyrophosphoryl-undecaprenol N-acetylglucosamine transferase (355 aa).

Residues 15–17, Asn127, Arg163, Ser191, Ile244, 263–268, and Gln288 contribute to the UDP-N-acetyl-alpha-D-glucosamine site; these read TGG and ALTVSE.

Belongs to the glycosyltransferase 28 family. MurG subfamily.

The protein resides in the cell inner membrane. It carries out the reaction di-trans,octa-cis-undecaprenyl diphospho-N-acetyl-alpha-D-muramoyl-L-alanyl-D-glutamyl-meso-2,6-diaminopimeloyl-D-alanyl-D-alanine + UDP-N-acetyl-alpha-D-glucosamine = di-trans,octa-cis-undecaprenyl diphospho-[N-acetyl-alpha-D-glucosaminyl-(1-&gt;4)]-N-acetyl-alpha-D-muramoyl-L-alanyl-D-glutamyl-meso-2,6-diaminopimeloyl-D-alanyl-D-alanine + UDP + H(+). It participates in cell wall biogenesis; peptidoglycan biosynthesis. Its function is as follows. Cell wall formation. Catalyzes the transfer of a GlcNAc subunit on undecaprenyl-pyrophosphoryl-MurNAc-pentapeptide (lipid intermediate I) to form undecaprenyl-pyrophosphoryl-MurNAc-(pentapeptide)GlcNAc (lipid intermediate II). The sequence is that of UDP-N-acetylglucosamine--N-acetylmuramyl-(pentapeptide) pyrophosphoryl-undecaprenol N-acetylglucosamine transferase from Escherichia coli O157:H7.